A 432-amino-acid polypeptide reads, in one-letter code: Metacaspase-1 (432 aa).

Residues 1-11 are compositionally biased toward basic residues; that stretch reads MEVMDHHHHTS. Disordered regions lie at residues 1-21 and 41-87; these read MEVM…TTRR and PQPG…PNAP. Positions 12-21 are enriched in low complexity; the sequence is STRPNPTTRR. Pro residues predominate over residues 46 to 74; that stretch reads GAPPPQGGYGYPQPPPPQQPYGYSQPPPQ. Active-site residues include histidine 223 and cysteine 279.

It belongs to the peptidase C14B family.

Functionally, involved in cell death (apoptosis). The protein is Metacaspase-1 (casA) of Sclerotinia sclerotiorum (strain ATCC 18683 / 1980 / Ss-1) (White mold).